The primary structure comprises 493 residues: Protein translocase subunit SecY (493 aa).

Residues 1-21 are Cytoplasmic-facing; the sequence is MDSVIRALQPYFERIPSVERP. The chain crosses the membrane as a helical span at residues 22-48; that stretch reads KGHVHFREKFGWTAAILLLYFILSNVP. At 49–59 the chain is on the extracellular side; that stretch reads VFGLSPESIDI. The segment at residues 60–67 is an intramembrane region (helical); it reads FAAYRALF. Residues 60–88 traverse the membrane as a discontinuously helical segment; it reads FAAYRALFAGSTGSIIALGIGPIVTASII. Residues 68 to 79 lie within the membrane without spanning it; the sequence is AGSTGSIIALGI. The segment at residues 80–88 is an intramembrane region (helical); that stretch reads GPIVTASII. The Cytoplasmic portion of the chain corresponds to 89–109; it reads LQLLVGAGIIKLDLTNPEDRA. Residues 110 to 134 form a helical membrane-spanning segment; that stretch reads AYQDFQRFLVFVMIAVEAIPQIAGG. The Extracellular segment spans residues 135-151; it reads LLKPDLNLAAQLGVSPG. The helical transmembrane segment at 152–176 threads the bilayer; the sequence is IISFLIFIQLFIGGVLIVYMDEVVS. Over 177 to 182 the chain is Cytoplasmic; the sequence is KWGIGS. Residues 183–201 form a helical membrane-spanning segment; it reads GVSLFILAGIAQSIVVGLF. At 202–244 the chain is on the extracellular side; sequence NWVIPPNSAMPAGIIPRWIWIAQNYPLDQLFTGSGLAFLLIQG. The chain crosses the membrane as a helical span at residues 245-266; that stretch reads GILALITTAAIILLVVFFEGTR. The Cytoplasmic segment spans residues 267 to 291; it reads VEIPLAHAVARGARGRFPIKLIYAS. A helical transmembrane segment spans residues 292–313; sequence VLPMIFVRALQANVVALGQVLH. Over 314-367 the chain is Extracellular; that stretch reads ARGVTIFGEFVNGKAVSGLMFFLQPVSSPYDWIPSLVKSQGAAFAAIPDWMIYL. Residues 368–387 form a helical membrane-spanning segment; it reads HLLIDALILVVGGIIFAWFW. Topologically, residues 388 to 430 are cytoplasmic; sequence VETSGMDARTVASQIAKSGMQVPGFRKSPQVLERVLSRYIPKV. A helical membrane pass occupies residues 431–449; the sequence is TILGGAIIGILTLVANMLG. Residues 450–454 lie on the Extracellular side of the membrane; sequence TIGNV. A helical membrane pass occupies residues 455-469; it reads SGTGLLLAVSIAYRF. The Cytoplasmic segment spans residues 470–493; that stretch reads YEDLAKEQLTEMHPLIRRMLGEEA.

It belongs to the SecY/SEC61-alpha family. As to quaternary structure, component of the Sec protein translocase complex. Heterotrimer consisting of alpha (SecY), beta (SecG) and gamma (SecE) subunits. The heterotrimers can form oligomers, although 1 heterotrimer is thought to be able to translocate proteins. Interacts with the ribosome. May interact with SecDF, and other proteins may be involved.

The protein resides in the cell membrane. The central subunit of the protein translocation channel SecYEG. Consists of two halves formed by TMs 1-5 and 6-10. These two domains form a lateral gate at the front which open onto the bilayer between TMs 2 and 7, and are clamped together by SecE at the back. The channel is closed by both a pore ring composed of hydrophobic SecY resides and a short helix (helix 2A) on the extracellular side of the membrane which forms a plug. The plug probably moves laterally to allow the channel to open. The ring and the pore may move independently. In Archaeoglobus fulgidus (strain ATCC 49558 / DSM 4304 / JCM 9628 / NBRC 100126 / VC-16), this protein is Protein translocase subunit SecY.